A 229-amino-acid polypeptide reads, in one-letter code: 2-C-methyl-D-erythritol 4-phosphate cytidylyltransferase (229 aa).

This sequence belongs to the IspD/TarI cytidylyltransferase family. IspD subfamily.

It carries out the reaction 2-C-methyl-D-erythritol 4-phosphate + CTP + H(+) = 4-CDP-2-C-methyl-D-erythritol + diphosphate. The protein operates within isoprenoid biosynthesis; isopentenyl diphosphate biosynthesis via DXP pathway; isopentenyl diphosphate from 1-deoxy-D-xylulose 5-phosphate: step 2/6. Its function is as follows. Catalyzes the formation of 4-diphosphocytidyl-2-C-methyl-D-erythritol from CTP and 2-C-methyl-D-erythritol 4-phosphate (MEP). This Neisseria gonorrhoeae (strain ATCC 700825 / FA 1090) protein is 2-C-methyl-D-erythritol 4-phosphate cytidylyltransferase.